The following is a 380-amino-acid chain: MANIRKTHPLLKIINGAFIDLPAPSNISVWWNSGSLLGLCLITQILTGLFLAMHYTADISTAFSSIAHICRDVNYGWLIRNIHANGASFFFICLYLHVARGMYYGSYLYKETWNIGVVLLLLTMMTAFVGYVLPWGQMSFWGATVITNLLSAFPYIGDTLVQWIWGGFSVDNATLTRFFAFHFLLPFVIAGASMIHLLFLHQTGSNNPTGLNSDADKVPFHPYFSYKDLLGFILMLIGLTAIALFSPNLLGDPDNFTPANPLVTPPHIKPEWYFLFAYAILRSIPNKLGGVLALLFSILVLMLVPILHTSKQRGNTFRPLSQILFWTLVADMLVLTWIGGQPVEHPFVLIGQVASTIYFALFLIALPLTGWLENKILNWN.

A run of 4 helical transmembrane segments spans residues 33 to 53, 77 to 98, 113 to 133, and 178 to 198; these read SGSL…FLAM, WLIR…YLHV, WNIG…GYVL, and FFAF…IHLL. His83 and His97 together coordinate heme b. Residues His182 and His196 each contribute to the heme b site. A ubiquinone is bound at residue His201. 4 consecutive transmembrane segments (helical) span residues 226–246, 288–308, 320–340, and 347–367; these read YKDL…ALFS, LGGV…PILH, LSQI…WIGG, and FVLI…IALP.

It belongs to the cytochrome b family. As to quaternary structure, the cytochrome bc1 complex contains 3 respiratory subunits (MT-CYB, CYC1 and UQCRFS1), 2 core proteins (UQCRC1 and UQCRC2) and probably 6 low-molecular weight proteins. Requires heme b as cofactor.

The protein localises to the mitochondrion inner membrane. In terms of biological role, component of the ubiquinol-cytochrome c reductase complex (complex III or cytochrome b-c1 complex) that is part of the mitochondrial respiratory chain. The b-c1 complex mediates electron transfer from ubiquinol to cytochrome c. Contributes to the generation of a proton gradient across the mitochondrial membrane that is then used for ATP synthesis. This chain is Cytochrome b (mt-cyb), found in Polyodon spathula (North American paddlefish).